The sequence spans 334 residues: L-lactate dehydrogenase B chain (334 aa).

Ala2 carries the N-acetylalanine modification. Residue Lys7 is modified to N6-acetyllysine. Ser44 bears the Phosphoserine mark. Residues 53–58 and Arg100 each bind NAD(+); that span reads DVLEDK. Lys58 is modified (N6-acetyllysine). Substrate is bound at residue Arg107. Lys119 carries the N6-acetyllysine modification. Residue Asn139 coordinates NAD(+). Substrate-binding residues include Asn139 and Arg170. His194 functions as the Proton acceptor in the catalytic mechanism. Tyr240 carries the phosphotyrosine modification. Position 249 (Thr249) interacts with substrate. Position 329 is an N6-acetyllysine (Lys329).

The protein belongs to the LDH/MDH superfamily. LDH family. As to quaternary structure, homotetramer. Interacts with PTEN upstream reading frame protein MP31; the interaction leads to inhibition of mitochondrial lactate dehydrogenase activity, preventing conversion of lactate to pyruvate in mitochondria.

It is found in the cytoplasm. The protein resides in the mitochondrion inner membrane. It catalyses the reaction (S)-lactate + NAD(+) = pyruvate + NADH + H(+). It functions in the pathway fermentation; pyruvate fermentation to lactate; (S)-lactate from pyruvate: step 1/1. Functionally, interconverts simultaneously and stereospecifically pyruvate and lactate with concomitant interconversion of NADH and NAD(+). The protein is L-lactate dehydrogenase B chain (LDHB) of Bos taurus (Bovine).